The chain runs to 153 residues: Interleukin-4 (153 aa).

An N-terminal signal peptide occupies residues 1 to 24; that stretch reads MGLTSQLLPPLFFLLACAGNFAHG. 3 cysteine pairs are disulfide-bonded: cysteine 27/cysteine 151, cysteine 48/cysteine 89, and cysteine 70/cysteine 123. The N-linked (GlcNAc...) asparagine glycan is linked to asparagine 62. A glycan (N-linked (GlcNAc...) asparagine) is linked at asparagine 129.

This sequence belongs to the IL-4/IL-13 family.

It is found in the secreted. In terms of biological role, participates in at least several B-cell activation processes as well as of other cell types. It is a costimulator of DNA-synthesis. It induces the expression of class II MHC molecules on resting B-cells. It enhances both secretion and cell surface expression of IgE and IgG1. It also regulates the expression of the low affinity Fc receptor for IgE (CD23) on both lymphocytes and monocytes. Positively regulates IL31RA expression in macrophages. Stimulates autophagy in dendritic cells by interfering with mTORC1 signaling and through the induction of RUFY4. This Macaca mulatta (Rhesus macaque) protein is Interleukin-4 (IL4).